A 175-amino-acid polypeptide reads, in one-letter code: UPF0398 protein SPH_0478 (175 aa).

Belongs to the UPF0398 family.

This is UPF0398 protein SPH_0478 from Streptococcus pneumoniae (strain Hungary19A-6).